Consider the following 154-residue polypeptide: Small ribosomal subunit protein eS10 (154 aa).

Residues 91–154 (ATMKKQASRP…ERSAPAPQQN (64 aa)) are disordered. The segment covering 124–135 (RGDRRQGGDRRG) has biased composition (basic and acidic residues).

It belongs to the eukaryotic ribosomal protein eS10 family.

The protein resides in the cytoplasm. The polypeptide is Small ribosomal subunit protein eS10 (rps10) (Dictyostelium discoideum (Social amoeba)).